We begin with the raw amino-acid sequence, 304 residues long: 4-diphosphocytidyl-2-C-methyl-D-erythritol kinase (304 aa).

Lysine 20 is an active-site residue. Residue proline 106–glycine 116 participates in ATP binding. Aspartate 148 is a catalytic residue.

It belongs to the GHMP kinase family. IspE subfamily.

It carries out the reaction 4-CDP-2-C-methyl-D-erythritol + ATP = 4-CDP-2-C-methyl-D-erythritol 2-phosphate + ADP + H(+). The protein operates within isoprenoid biosynthesis; isopentenyl diphosphate biosynthesis via DXP pathway; isopentenyl diphosphate from 1-deoxy-D-xylulose 5-phosphate: step 3/6. In terms of biological role, catalyzes the phosphorylation of the position 2 hydroxy group of 4-diphosphocytidyl-2C-methyl-D-erythritol. This chain is 4-diphosphocytidyl-2-C-methyl-D-erythritol kinase, found in Bartonella bacilliformis (strain ATCC 35685 / KC583 / Herrer 020/F12,63).